A 7570-amino-acid chain; its full sequence is Dystonin (7570 aa).

Calponin-homology (CH) domains lie at 35-138 (KVQK…LHFQ) and 151-255 (MSAK…DAFP). The actin-binding stretch occupies residues 35 to 252 (KVQKKTFTKW…VITYVSSLYD (218 aa)). Phosphoserine is present on residues Leu135, Lys184, Ser236, and Ser237. 2 Spectrin repeats span residues 602–699 (EINM…RHLD) and 701–802 (LHNF…QHIK). Positions 887–944 (KTSIPIKAICDYRQIEITIYKDDECVLANNSHRAKWKVISPTGNEAMVPSVCFTVPPP) constitute an SH3 domain. Spectrin repeat units follow at residues 1293–1422 (KYYR…KFAG) and 1440–1540 (KEHV…QESQ). Position 1382 is a phosphoserine (Ser1382). The Nuclear localization signal; in isoform 6 signature appears at 1383-1389 (PVKRRRM). Glu1565 bears the Phosphoserine mark. Plectin repeat units follow at residues 1584–1626 (IRLL…QLKE), 1660–1703 (KVLE…LERQ), 1774–1817 (RLLS…LTYQ), 1818–1855 (VQTG…LEAQ), and 1856–1891 (RGYV…KILN). Ser2229 is modified (phosphoserine). 3 disordered regions span residues 2317–2346 (SNTS…IEEY), 2383–2441 (LLND…DETA), and 2585–2616 (DYIY…GKPR). Residues 2336–2345 (DKEDESEIEE) show a composition bias toward acidic residues. Residues 2385–2394 (NDQQNNTGTD) show a composition bias toward low complexity. Composition is skewed to acidic residues over residues 2395 to 2412 (TDSD…DDDH), 2430 to 2439 (YDTLQEENDE), and 2591 to 2605 (NDQD…DEEG). Phosphoserine is present on Ser2919. The tract at residues 3190–3221 (EASTVPSDSQMSDSSGVSPMTNSSELKPESRD) is disordered. Over residues 3192–3209 (STVPSDSQMSDSSGVSPM) the composition is skewed to low complexity. Spectrin repeat units lie at residues 3395-3501 (LQHT…KQIM), 3643-3752 (QEYK…KELD), 3926-4040 (EKFD…NNLK), 4047-4153 (QHYE…EKLQ), 4160-4259 (LSVQ…ETLA), 4269-4368 (ELFE…EAVT), 4516-4621 (QKAQ…QKLE), 4628-4732 (TQFQ…DWID), 4742-4842 (QSLL…QHLQ), 4849-4951 (HQFQ…NKLK), 4958-5058 (LKYK…FCLE), 5068-5167 (QEVS…SFLE), 5174-5277 (GHFQ…EQVE), 5284-5388 (EEFY…AQLQ), 5395-5497 (GRFQ…RQLE), 5504-5715 (QQFH…KTLE), 5831-5933 (QQFD…LQLE), 5941-6041 (QFWE…VALD), 6048-6154 (TQFH…AKLL), 6161-6263 (EKFW…DKLE), 6270-6373 (VQYQ…HKLE), 6380-6482 (GQFQ…QQLD), 6489-6591 (KGFH…TKLE), 6598-6700 (MEFH…RSLD), 6707-6810 (KQFH…NKLE), 6817-6918 (GQFT…TRLE), 6925-7027 (EEFH…QRLA), and 7037-7167 (QELL…RKLN). Ser3968 bears the Phosphoserine mark. Ser4749 bears the Phosphoserine mark. Residue Lys5470 forms a Glycyl lysine isopeptide (Lys-Gly) (interchain with G-Cter in ubiquitin) linkage. 2 consecutive EF-hand domains span residues 7197–7232 (HKKS…SKFP) and 7233–7268 (TSRL…NKDA). The Ca(2+) site is built by Asp7210, Asp7212, Asp7214, Lys7216, Glu7221, Asp7246, Asp7248, Asp7250, Tyr7252, and Glu7257. The GAR domain maps to 7273–7351 (TDADKIEDEV…EFLVKNDPCR (79 aa)). Disordered regions lie at residues 7358 to 7379 (KMLR…AKGR), 7395 to 7452 (SQGM…SKLR), and 7481 to 7570 (QFAD…SSKR). Residues 7362-7374 (SESNSSITTTQPT) show a composition bias toward polar residues. Low complexity-rich tracts occupy residues 7411-7441 (SSRG…TTTP) and 7490-7504 (SRPG…GSRA). Residue Ser7432 is modified to Phosphoserine. Phosphoserine is present on residues Ser7510, Ser7513, and Ser7525. Polar residues predominate over residues 7519-7535 (EIQSVCSDVETVPQTHR). The Microtubule tip localization signal motif lies at 7550–7553 (SKIP).

In terms of assembly, homodimer. Isoform 1 interacts (via N-terminus) with PLEC (via N-terminus). Interacts with the neuronal intermediate filament protein, PRPH. Interacts with DES. Interacts with SYNE3. Isoform 1 and isoform 6 can homodimerize (via N-terminus). Isoform 1 interacts (via N-terminus) with ACTN2. Isoform 1 interacts (via N-terminus) with PLEC (via N-terminus). Isoform 3 interacts (via N-terminus) with COL17A1 (via cytoplasmic region). Isoform 3 interacts (via N-terminus) with ITGB4 isoform beta-4a (via cytoplasmic region). Isoform 3 interacts (via N-terminus) with ERBIN (via C-terminus). Isoform 3 associates (via C-terminal) with KRT5-KRT14 (via rod region) intermediate filaments of keratins. Interacts with MAPRE1; probably required for targeting to the growing microtubule plus ends. Interacts with TMIGD2. Isoform 9 interacts with TMEM108. Isoform 1 is expressed in myoblasts (at protein level). Isoform 3 is expressed in the skin. Isoform 6 is expressed in the brain. Highly expressed in skeletal muscle and cultured keratinocytes.

The protein resides in the cytoplasm. It is found in the cytoskeleton. Its subcellular location is the stress fiber. The protein localises to the cell projection. It localises to the axon. The protein resides in the myofibril. It is found in the sarcomere. Its subcellular location is the z line. The protein localises to the h zone. It localises to the cell junction. The protein resides in the hemidesmosome. It is found in the nucleus. Its subcellular location is the nucleus envelope. The protein localises to the membrane. It localises to the endoplasmic reticulum membrane. The protein resides in the cell cortex. It is found in the cell membrane. Functionally, cytoskeletal linker protein. Acts as an integrator of intermediate filaments, actin and microtubule cytoskeleton networks. Required for anchoring either intermediate filaments to the actin cytoskeleton in neural and muscle cells or keratin-containing intermediate filaments to hemidesmosomes in epithelial cells. The proteins may self-aggregate to form filaments or a two-dimensional mesh. Regulates the organization and stability of the microtubule network of sensory neurons to allow axonal transport. Mediates docking of the dynein/dynactin motor complex to vesicle cargos for retrograde axonal transport through its interaction with TMEM108 and DCTN1. Its function is as follows. Plays a structural role in the assembly of hemidesmosomes of epithelial cells; anchors keratin-containing intermediate filaments to the inner plaque of hemidesmosomes. Required for the regulation of keratinocyte polarity and motility; mediates integrin ITGB4 regulation of RAC1 activity. Required for bundling actin filaments around the nucleus. In terms of biological role, regulates the organization and stability of the microtubule network of sensory neurons to allow axonal transport. The chain is Dystonin from Homo sapiens (Human).